Consider the following 535-residue polypeptide: MTILQEVARRRTFAIISHPDAGKTTLTEKLLLFAGAIQIAGSVKARKASRHASSDWMEIEKQRGISVASSVMQMEYRDCVINLLDTPGHQDFSEDTYRVLTAVDAALMVIDAANGVEPQTIRLLQVCRARNTPIITFINKMDREVREPLELLSEIESHLGMDAVPFSWPVGMGKSFGGVFDIRRDRMRLFRPGQERRNDDDEFIDGLSNPQIAERFGQAFEQASGEIELINEAAPAFDHAAFLAGKQTPVFFGSAINNFGVQEVLDALVDLAPQPGARQALEREVKPEEPKFTGVVFKVQANMDPAHRDRVAFVRVSSGRFERGMRLKVARTNKEMRPNNVVSFLSQRRELLDEAYAGDVIGIPNHGVLQLGDVLTEGESLRFTGLPFFAPELFQAVEVKDPLRTKQLRVGLTQLGEEGAIQVFRPEVAGGSLLLGAVGQLQFEVVAHRLKTEYGVEARMLPSRYTMARWITSENPKALRKFMDANAAHIAYDVVDAAAFLIGSSAQLRVAEELYPEVKFHAMREHGGKVFGDTL.

Residues Ala-8–Gly-276 enclose the tr-type G domain. GTP is bound by residues Ser-17–Thr-24, Asp-85–His-89, and Asn-139–Asp-142.

It belongs to the TRAFAC class translation factor GTPase superfamily. Classic translation factor GTPase family. PrfC subfamily.

It localises to the cytoplasm. Functionally, increases the formation of ribosomal termination complexes and stimulates activities of RF-1 and RF-2. It binds guanine nucleotides and has strong preference for UGA stop codons. It may interact directly with the ribosome. The stimulation of RF-1 and RF-2 is significantly reduced by GTP and GDP, but not by GMP. The chain is Peptide chain release factor 3 from Bordetella avium (strain 197N).